The following is a 354-amino-acid chain: Guanine nucleotide-binding protein G(o) subunit alpha (354 aa).

G2 is lipidated: N-myristoyl glycine. C3 carries the S-palmitoyl cysteine lipid modification. The G-alpha domain maps to 32–354 (KDVKLLLLGA…AYNLRGCGLY (323 aa)). The G1 motif stretch occupies residues 35–48 (KLLLLGAGESGKST). Positions 43, 46, 47, 48, 152, 176, 177, 178, and 179 each coordinate GTP. S47 is a Mg(2+) binding site. The tract at residues 174–182 (DILRTRVKT) is G2 motif. Residue T182 coordinates Mg(2+). The segment at 197-206 (FRLFDVGGQR) is G3 motif. The segment at 266–273 (ILFLNKKD) is G4 motif. Positions 270, 273, and 325 each coordinate GTP. Residues 324–329 (TCATDT) are G5 motif.

This sequence belongs to the G-alpha family. G(i/o/t/z) subfamily. As to quaternary structure, g proteins are composed of 3 units; alpha, beta and gamma.

The enzyme catalyses GTP + H2O = GDP + phosphate + H(+). Functionally, guanine nucleotide-binding proteins (G proteins) function as transducers downstream of G protein-coupled receptors (GPCRs) in numerous signaling cascades. The alpha chain contains the guanine nucleotide binding site and alternates between an active, GTP-bound state and an inactive, GDP-bound state. Signaling by an activated GPCR promotes GDP release and GTP binding. The alpha subunit has a low GTPase activity that converts bound GTP to GDP, thereby terminating the signal. Both GDP release and GTP hydrolysis are modulated by numerous regulatory proteins. Signaling is mediated via effector proteins, such as adenylate cyclase. Inhibits adenylate cyclase activity, leading to decreased intracellular cAMP levels. The polypeptide is Guanine nucleotide-binding protein G(o) subunit alpha (gna0) (Xenopus laevis (African clawed frog)).